A 215-amino-acid polypeptide reads, in one-letter code: Chaperone protein TorD (215 aa).

The protein belongs to the TorD/DmsD family. TorD subfamily.

The protein localises to the cytoplasm. Functionally, involved in the biogenesis of TorA. Acts on TorA before the insertion of the molybdenum cofactor and, as a result, probably favors a conformation of the apoenzyme that is competent for acquiring the cofactor. This chain is Chaperone protein TorD, found in Vibrio vulnificus (strain CMCP6).